The primary structure comprises 397 residues: Succinate--CoA ligase [ADP-forming] subunit beta (397 aa).

The region spanning 9 to 254 is the ATP-grasp domain; it reads KALLAQYGAP…ETEEDPKELA (246 aa). ATP-binding positions include K46, 53–55, E109, S112, and E117; that span reads GRG. Positions 209 and 223 each coordinate Mg(2+). Substrate-binding positions include N274 and 331 to 333; that span reads GIM.

This sequence belongs to the succinate/malate CoA ligase beta subunit family. Heterotetramer of two alpha and two beta subunits. Mg(2+) serves as cofactor.

It catalyses the reaction succinate + ATP + CoA = succinyl-CoA + ADP + phosphate. It carries out the reaction GTP + succinate + CoA = succinyl-CoA + GDP + phosphate. It functions in the pathway carbohydrate metabolism; tricarboxylic acid cycle; succinate from succinyl-CoA (ligase route): step 1/1. Succinyl-CoA synthetase functions in the citric acid cycle (TCA), coupling the hydrolysis of succinyl-CoA to the synthesis of either ATP or GTP and thus represents the only step of substrate-level phosphorylation in the TCA. The beta subunit provides nucleotide specificity of the enzyme and binds the substrate succinate, while the binding sites for coenzyme A and phosphate are found in the alpha subunit. This chain is Succinate--CoA ligase [ADP-forming] subunit beta, found in Jannaschia sp. (strain CCS1).